We begin with the raw amino-acid sequence, 189 residues long: Elongation factor P (189 aa).

It belongs to the elongation factor P family.

The protein localises to the cytoplasm. Its pathway is protein biosynthesis; polypeptide chain elongation. Functionally, involved in peptide bond synthesis. Stimulates efficient translation and peptide-bond synthesis on native or reconstituted 70S ribosomes in vitro. Probably functions indirectly by altering the affinity of the ribosome for aminoacyl-tRNA, thus increasing their reactivity as acceptors for peptidyl transferase. The protein is Elongation factor P of Pseudomonas savastanoi pv. phaseolicola (strain 1448A / Race 6) (Pseudomonas syringae pv. phaseolicola (strain 1448A / Race 6)).